Consider the following 258-residue polypeptide: Aspartate/glutamate leucyltransferase (258 aa).

Belongs to the R-transferase family. Bpt subfamily.

The protein resides in the cytoplasm. The enzyme catalyses N-terminal L-glutamyl-[protein] + L-leucyl-tRNA(Leu) = N-terminal L-leucyl-L-glutamyl-[protein] + tRNA(Leu) + H(+). The catalysed reaction is N-terminal L-aspartyl-[protein] + L-leucyl-tRNA(Leu) = N-terminal L-leucyl-L-aspartyl-[protein] + tRNA(Leu) + H(+). In terms of biological role, functions in the N-end rule pathway of protein degradation where it conjugates Leu from its aminoacyl-tRNA to the N-termini of proteins containing an N-terminal aspartate or glutamate. The polypeptide is Aspartate/glutamate leucyltransferase (Rhizobium leguminosarum bv. trifolii (strain WSM2304)).